We begin with the raw amino-acid sequence, 180 residues long: ATP-dependent protease subunit HslV (180 aa).

Threonine 9 is a catalytic residue. Residues alanine 164, cysteine 167, and threonine 170 each coordinate Na(+).

It belongs to the peptidase T1B family. HslV subfamily. In terms of assembly, a double ring-shaped homohexamer of HslV is capped on each side by a ring-shaped HslU homohexamer. The assembly of the HslU/HslV complex is dependent on binding of ATP.

It is found in the cytoplasm. The catalysed reaction is ATP-dependent cleavage of peptide bonds with broad specificity.. Allosterically activated by HslU binding. Its function is as follows. Protease subunit of a proteasome-like degradation complex believed to be a general protein degrading machinery. The sequence is that of ATP-dependent protease subunit HslV from Leptospira interrogans serogroup Icterohaemorrhagiae serovar Lai (strain 56601).